A 298-amino-acid chain; its full sequence is N-acetylmuramic acid 6-phosphate etherase (298 aa).

One can recognise an SIS domain in the interval 55–218; the sequence is IHAQVSGGGR…STGLMIKSGK (164 aa). Glu83 (proton donor) is an active-site residue. Glu114 is an active-site residue.

Belongs to the GCKR-like family. MurNAc-6-P etherase subfamily. As to quaternary structure, homodimer.

The enzyme catalyses N-acetyl-D-muramate 6-phosphate + H2O = N-acetyl-D-glucosamine 6-phosphate + (R)-lactate. Its pathway is amino-sugar metabolism; 1,6-anhydro-N-acetylmuramate degradation. It participates in amino-sugar metabolism; N-acetylmuramate degradation. It functions in the pathway cell wall biogenesis; peptidoglycan recycling. Specifically catalyzes the cleavage of the D-lactyl ether substituent of MurNAc 6-phosphate, producing GlcNAc 6-phosphate and D-lactate. Together with AnmK, is also required for the utilization of anhydro-N-acetylmuramic acid (anhMurNAc) either imported from the medium or derived from its own cell wall murein, and thus plays a role in cell wall recycling. The chain is N-acetylmuramic acid 6-phosphate etherase from Shigella sonnei (strain Ss046).